A 1033-amino-acid polypeptide reads, in one-letter code: Tyrosine-protein kinase-like otk (1033 aa).

An N-terminal signal peptide occupies residues 1 to 22; it reads MTARMISIYGLVLASMMASVLA. Residues 23–581 lie on the Extracellular side of the membrane; that stretch reads SSSRFQRLPQ…GGDGFLVTRA (559 aa). Ig-like C2-type domains are found at residues 25–114, 113–199, 251–365, 368–463, and 468–558; these read SRFQ…AKLS, LSVI…RVMS, PEDL…VPVS, PGVL…VAIN, and PKFS…VQLI. Asn-39 carries an N-linked (GlcNAc...) asparagine glycan. 4 cysteine pairs are disulfide-bonded: Cys-46–Cys-95, Cys-137–Cys-188, Cys-276–Cys-354, and Cys-399–Cys-447. N-linked (GlcNAc...) asparagine glycosylation is found at Asn-336, Asn-417, Asn-429, Asn-444, Asn-457, Asn-512, and Asn-524. Cys-490 and Cys-542 are disulfide-bonded. The helical transmembrane segment at 582-602 threads the bilayer; that stretch reads VLITMTVALAYIVLVVGLMLW. Over 603 to 1033 the chain is Cytoplasmic; sequence CRYRRQARKA…LSKAMQSAEK (431 aa). Disordered stretches follow at residues 617–679 and 718–760; these read LSTK…KKSA and SPSD…KTSM. Positions 655–673 are enriched in polar residues; that stretch reads KSSGDAQKSDDTACSQQSR. At Ser-678 the chain carries Phosphoserine. In terms of domain architecture, Protein kinase; inactive spans 692-1028; the sequence is LSELIQIGRG…QLGAALSKAM (337 aa). Positions 720–731 are enriched in basic and acidic residues; that stretch reads SDKDADTEKQHS.

Belongs to the protein kinase superfamily. Tyr protein kinase family. Insulin receptor subfamily. Interacts with plexA; component of a receptor complex that mediates the repulsive signaling in response to Semaphorin ligands.

The protein localises to the cell membrane. In terms of biological role, acts as a calcium-dependent, homophilic cell adhesion molecule that regulates neural recognition during the development of the nervous system. Component of the repulsive Plexin signaling response to regulate motor axon guidance at the embryonic stage. Also component of a receptor complex that is required in the adult visual system to innervate the lamina layer; specific targeting of R1-R6 axons. The protein is Tyrosine-protein kinase-like otk of Drosophila yakuba (Fruit fly).